Reading from the N-terminus, the 167-residue chain is 6,7-dimethyl-8-ribityllumazine synthase (167 aa).

5-amino-6-(D-ribitylamino)uracil is bound by residues Phe-26, 60-62 (AFE), and 89-91 (AII). Residue 94 to 95 (ET) coordinates (2S)-2-hydroxy-3-oxobutyl phosphate. The active-site Proton donor is the His-97. Phe-122 is a binding site for 5-amino-6-(D-ribitylamino)uracil. Arg-136 is a (2S)-2-hydroxy-3-oxobutyl phosphate binding site.

This sequence belongs to the DMRL synthase family. In terms of assembly, forms an icosahedral capsid composed of 60 subunits, arranged as a dodecamer of pentamers.

The catalysed reaction is (2S)-2-hydroxy-3-oxobutyl phosphate + 5-amino-6-(D-ribitylamino)uracil = 6,7-dimethyl-8-(1-D-ribityl)lumazine + phosphate + 2 H2O + H(+). It participates in cofactor biosynthesis; riboflavin biosynthesis; riboflavin from 2-hydroxy-3-oxobutyl phosphate and 5-amino-6-(D-ribitylamino)uracil: step 1/2. In terms of biological role, catalyzes the formation of 6,7-dimethyl-8-ribityllumazine by condensation of 5-amino-6-(D-ribitylamino)uracil with 3,4-dihydroxy-2-butanone 4-phosphate. This is the penultimate step in the biosynthesis of riboflavin. The protein is 6,7-dimethyl-8-ribityllumazine synthase of Ruthia magnifica subsp. Calyptogena magnifica.